Here is an 831-residue protein sequence, read N- to C-terminus: MTRTFDIDYVLANISDQDKIALLSGIDFWHTHPIPQFNVPSVRVTDGPNGIRGTKFFAGVPAACLPCGTALGATWDRDLLRRAGELLGDECIAKGAHCWLGPTVNMQRSPLGGRGFESFSEDPYLAGVAAASMIVGCESKGIIATVKHFVGNDQEHERRAVDVIVTPRALREIYLRPFQIVARDARPGALMTSYNKVNGKHVVEDPKMYDLIRKDWGWDPLVMSDWYGTYTTIDSTNAGLDLEMPGVSRYRGKYIESAMQARLIKSSTLDARARKVLEFVQRASRTKVSEVEKGRNHPEDRALMRTLCSNSIVLLKNEENILPLPKNVKKIALIGSHIKTPAISGGGSAALKPYYASTLYDAVREALPNAEVLYETGAHAHNMLPVIDRLLSNAVIHFYNEPMTQPNRKCLGTEPVTTTAFQFMDYKLAGLNRALFWSTLIGDFTPDQSGIWDFGLSVFGTANLYINDELIIDNTTKQTKGTSFFGKGTREEIGSMKLTAGQTYKIRIEFGSANTTTMKTTGMVNFGGGAANLGASLRLDAEEMINRAVKAAEDADYAIICTGLNQDWESEGFDRPHMDLPPVGIDKMISGVLDIAAHKTVIVNQSGTPVTMPWASRAKSIVHSWYGGNETGHGIADILFGDVNPSGKLSLSWPIDVRHNPAYLNYASVGGRVLYGEDIYVGYRFYEKTGREVLFPFGHGLSYTTFAVSPEALVSPGTFTPENPSNATVKIKNIGGAAGAQVLQLYVAAPNSPTPRPQKELQGFEKVFLRPGEEKTVIIRLDKYATSFWDEIEGMWKSEAGVYEVLIGTSSEDIVARGQFEVNQTRYWSGL.

An N-linked (GlcNAc...) asparagine glycan is attached at asparagine 13. The active site involves aspartate 225. A PA14 domain is found at 389–549; it reads RLLSNAVIHF…DAEEMINRAV (161 aa). Residues asparagine 474, asparagine 514, asparagine 604, asparagine 629, asparagine 726, and asparagine 823 are each glycosylated (N-linked (GlcNAc...) asparagine).

It belongs to the glycosyl hydrolase 3 family.

It is found in the secreted. It carries out the reaction Hydrolysis of terminal, non-reducing beta-D-glucosyl residues with release of beta-D-glucose.. The protein operates within glycan metabolism; cellulose degradation. In terms of biological role, beta-glucosidases are one of a number of cellulolytic enzymes involved in the degradation of cellulosic biomass. Catalyzes the last step releasing glucose from the inhibitory cellobiose. This Emericella nidulans (strain FGSC A4 / ATCC 38163 / CBS 112.46 / NRRL 194 / M139) (Aspergillus nidulans) protein is Probable beta-glucosidase H (bglH).